A 388-amino-acid chain; its full sequence is Na(+)/H(+) antiporter NhaA (388 aa).

At Met1–Asp11 the chain is on the cytoplasmic side. The helical transmembrane segment at Ala12 to Ser31 threads the bilayer. The Periplasmic portion of the chain corresponds to Gly32–Asn58. Residues Met59 to Lys80 traverse the membrane as a helical segment. Over Arg81 to Phe96 the chain is Cytoplasmic. Residues Pro97 to Asn116 traverse the membrane as a helical segment. The Periplasmic portion of the chain corresponds to Tyr117 to Thr122. The helical transmembrane segment at Arg123–Ala130 threads the bilayer. Residues Ala131 to Ile154 are Cytoplasmic-facing. A helical transmembrane segment spans residues Phe155–Thr176. Residues Asn177–Ser180 lie on the Periplasmic side of the membrane. Residues Met181–Cys200 form a helical membrane-spanning segment. Over Gly201 to Arg204 the chain is Cytoplasmic. Residues Thr205–Ser222 form a helical membrane-spanning segment. Gly223 is a topological domain (periplasmic). The helical transmembrane segment at Val224–Phe236 threads the bilayer. Over Ile237 to His253 the chain is Cytoplasmic. The chain crosses the membrane as a helical span at residues Val254–Ala272. Over Gly273–Ser286 the chain is Periplasmic. The chain crosses the membrane as a helical span at residues Ile287–Leu310. Over Ala311–Phe339 the chain is Cytoplasmic. A helical membrane pass occupies residues Thr340–Phe350. Topologically, residues Gly351–Leu357 are periplasmic. The chain crosses the membrane as a helical span at residues Ile358–Leu380. Over Arg381–Val388 the chain is Cytoplasmic.

This sequence belongs to the NhaA Na(+)/H(+) (TC 2.A.33) antiporter family.

Its subcellular location is the cell inner membrane. The enzyme catalyses Na(+)(in) + 2 H(+)(out) = Na(+)(out) + 2 H(+)(in). Functionally, na(+)/H(+) antiporter that extrudes sodium in exchange for external protons. This chain is Na(+)/H(+) antiporter NhaA, found in Shigella flexneri.